The primary structure comprises 160 residues: Cytochrome b6-f complex subunit 4 (160 aa).

Helical transmembrane passes span 36-56 (LLYMFPVVILGTLFCLVSLAV), 95-115 (LIGILLMAGVPVGLATVPFIE), and 131-151 (AVFLFGTLVAIWLGIGATLPI).

Belongs to the cytochrome b family. PetD subfamily. The 4 large subunits of the cytochrome b6-f complex are cytochrome b6, subunit IV (17 kDa polypeptide, petD), cytochrome f and the Rieske protein, while the 4 small subunits are petG, petL, petM and petN. The complex functions as a dimer.

The protein localises to the plastid. Its subcellular location is the chloroplast thylakoid membrane. Functionally, component of the cytochrome b6-f complex, which mediates electron transfer between photosystem II (PSII) and photosystem I (PSI), cyclic electron flow around PSI, and state transitions. The chain is Cytochrome b6-f complex subunit 4 from Bigelowiella natans (Pedinomonas minutissima).